Reading from the N-terminus, the 206-residue chain is Outer-membrane lipoprotein carrier protein (206 aa).

Positions M1 to A21 are cleaved as a signal peptide.

This sequence belongs to the LolA family. Monomer.

It localises to the periplasm. Functionally, participates in the translocation of lipoproteins from the inner membrane to the outer membrane. Only forms a complex with a lipoprotein if the residue after the N-terminal Cys is not an aspartate (The Asp acts as a targeting signal to indicate that the lipoprotein should stay in the inner membrane). The polypeptide is Outer-membrane lipoprotein carrier protein (Shewanella sp. (strain MR-4)).